A 360-amino-acid chain; its full sequence is 3-isopropylmalate dehydrogenase (360 aa).

NAD(+) is bound at residue 76–89 (GPKWEPLDYSLRPE). Positions 96, 106, 134, and 224 each coordinate substrate. Residues Asp224, Asp248, and Asp252 each contribute to the Mg(2+) site. 282–294 (GSAPDIAGRGIAN) serves as a coordination point for NAD(+).

This sequence belongs to the isocitrate and isopropylmalate dehydrogenases family. LeuB type 1 subfamily. As to quaternary structure, homodimer. Requires Mg(2+) as cofactor. Mn(2+) is required as a cofactor.

The protein localises to the cytoplasm. It catalyses the reaction (2R,3S)-3-isopropylmalate + NAD(+) = 4-methyl-2-oxopentanoate + CO2 + NADH. It functions in the pathway amino-acid biosynthesis; L-leucine biosynthesis; L-leucine from 3-methyl-2-oxobutanoate: step 3/4. Its function is as follows. Catalyzes the oxidation of 3-carboxy-2-hydroxy-4-methylpentanoate (3-isopropylmalate) to 3-carboxy-4-methyl-2-oxopentanoate. The product decarboxylates to 4-methyl-2 oxopentanoate. This is 3-isopropylmalate dehydrogenase from Methylococcus capsulatus (strain ATCC 33009 / NCIMB 11132 / Bath).